The sequence spans 476 residues: Zinc transporter SLC39A7 (476 aa).

The chain crosses the membrane as a helical span at residues 7 to 27 (APHWVAVGLLTWAALGLLVAG). Residues 35–109 (HKDVEEDFHG…SHGHSHDSLH (75 aa)) show a composition bias toward basic and acidic residues. Residues 35–131 (HKDVEEDFHG…HGTSREAGAP (97 aa)) are disordered. Position 73 is a pros-methylhistidine (histidine 73). A compositionally biased stretch (basic residues) spans 110-120 (HGGHGHAHREH). The next 3 helical transmembrane spans lie at 146–166 (ALGA…LIPV), 177–197 (LQIL…LHLI), and 222–242 (GPIL…LVVE). The segment at 249–320 (KGGHGHSHGH…QSPEEEKAGS (72 aa)) is disordered. Basic and acidic residues predominate over residues 257–292 (GHGDRHAHGDSHTHGDRHECSSKEKPSTEEEKEVGG). Residue serine 283 is modified to Phosphoserine. The next 2 membrane-spanning stretches (helical) occupy residues 393–413 (VTAI…GGAV) and 417–437 (VAGG…FIYV).

The protein belongs to the ZIP transporter (TC 2.A.5) family. KE4/Catsup subfamily. As to quaternary structure, homodimer. Post-translationally, methylation at some His residue by METTL9 leads to reduced zinc-binding. Rapidly phosphorylated by CK2 following Zn(2+) treatment. This phosphorylation is required for efficient cytosolic Zn(2+) release. In terms of tissue distribution, widely expressed. Highly expressed in the intestinal crypts.

It localises to the endoplasmic reticulum membrane. The protein resides in the golgi apparatus. Its subcellular location is the cis-Golgi network membrane. It carries out the reaction Zn(2+)(in) = Zn(2+)(out). In terms of biological role, transports Zn(2+) from the endoplasmic reticulum (ER)/Golgi apparatus to the cytosol, playing an essential role in the regulation of cytosolic zinc levels. Acts as a gatekeeper of zinc release from intracellular stores, requiring post-translational activation by phosphorylation, resulting in activation of multiple downstream pathways leading to cell growth and proliferation. Has an essential role in B cell development and is required for proper B cell receptor signaling. Plays an important role in maintaining intestinal epithelial homeostasis and skin dermis development by regulating ER function. Controls cell signaling pathways involved in glucose metabolism in skeletal muscle. Has a protective role against ER stress in different biological contexts. Mediates Zn(2+)-induced ferroptosis. The protein is Zinc transporter SLC39A7 (Slc39a7) of Mus musculus (Mouse).